We begin with the raw amino-acid sequence, 530 residues long: Growth-regulating factor 1 (530 aa).

The interval 1 to 41 (MDLGVRVSGHETVSSPGQTELGSGFSNKQERSGFDGEDCWR) is disordered. The segment covering 11-27 (ETVSSPGQTELGSGFSN) has biased composition (polar residues). Over residues 28-41 (KQERSGFDGEDCWR) the composition is skewed to basic and acidic residues. The region spanning 133 to 168 (PFSLTQWAELEQQALIYKYITANVPVPSSLLLSLKK) is the QLQ domain. The WRC domain maps to 196–240 (DPEPGRCRRTDGKKWRCSRDAVPDQKYCERHINRGRHRSRKPVEG). 2 short sequence motifs (bipartite nuclear localization signal) span residues 201–211 (RCRRTDGKKWR) and 229–236 (RGRHRSRK). 2 disordered regions span residues 223-250 (CERH…NAAA) and 485-530 (STFG…APSL). Over residues 485 to 508 (STFGSLSNSSSASSTIIGDNNNKN) the composition is skewed to low complexity. A compositionally biased stretch (polar residues) spans 519 to 530 (TLMNTSATAPSL).

The protein belongs to the GRF family. Interacts with GIF1 and GIF2. In terms of tissue distribution, strongly expressed in actively growing and developing tissues, such as roots, upper stems, and shoot tips containing the shoot apical meristem (SAM) and flower buds. Also expressed in mature flowers, but weakly expressed in mature stems and leaves.

It localises to the nucleus. Functionally, transcription activator that plays a role in the regulation of cell expansion in leaf and cotyledons tissues. Component of a network formed by miR396, the GRFs and their interacting factors (GIFs) acting in the regulation of meristem function, at least partially through the control of cell proliferation. microRNA396-GRF1/GRF3 regulatory module acts as a developmental regulator in the reprogramming of root cells during cyst nematode infection, leading to the formation of the syncytium. This chain is Growth-regulating factor 1 (GRF1), found in Arabidopsis thaliana (Mouse-ear cress).